A 130-amino-acid chain; its full sequence is Small ribosomal subunit protein uS9 (130 aa).

It belongs to the universal ribosomal protein uS9 family.

The protein is Small ribosomal subunit protein uS9 of Onion yellows phytoplasma (strain OY-M).